We begin with the raw amino-acid sequence, 349 residues long: Isopentenyl-diphosphate delta-isomerase (349 aa).

R8–K9 contacts substrate. FMN is bound by residues S66, S67–T69, S97, and N125. S97 to R99 contacts substrate. Substrate is bound at residue Q160. E161 is a binding site for Mg(2+). Residues K192, T222, G272 to K274, and A293 to R294 contribute to the FMN site.

It belongs to the IPP isomerase type 2 family. In terms of assembly, homooctamer. Dimer of tetramers. FMN is required as a cofactor. It depends on NADPH as a cofactor. The cofactor is Mg(2+).

It localises to the cytoplasm. It carries out the reaction isopentenyl diphosphate = dimethylallyl diphosphate. Functionally, involved in the biosynthesis of isoprenoids. Catalyzes the 1,3-allylic rearrangement of the homoallylic substrate isopentenyl (IPP) to its allylic isomer, dimethylallyl diphosphate (DMAPP). This Oceanobacillus iheyensis (strain DSM 14371 / CIP 107618 / JCM 11309 / KCTC 3954 / HTE831) protein is Isopentenyl-diphosphate delta-isomerase.